The sequence spans 402 residues: L-threonine ammonia-lyase (402 aa).

K51 is modified (N6-(pyridoxal phosphate)lysine). Residues N78, 178–181 (GGGL), and S302 contribute to the pyridoxal 5'-phosphate site. Positions 327–402 (KLKVELDDLP…GVGYLVDVLK (76 aa)) constitute an ACT domain.

This sequence belongs to the serine/threonine dehydratase family. Pyridoxal 5'-phosphate is required as a cofactor.

It carries out the reaction L-threonine = 2-oxobutanoate + NH4(+). The enzyme catalyses L-serine = pyruvate + NH4(+). Its pathway is amino-acid biosynthesis; L-isoleucine biosynthesis; 2-oxobutanoate from L-threonine: step 1/1. Its function is as follows. Catalyzes the conversion of threonine to 2-oxobutanoate and ammonia. Functions in the threonine-dependent pathway of isoleucine biosynthesis, which is the minor pathway for isoleucine biosynthesis in G.sulfurreducens. Also displays serine ammonia-lyase activity, yielding pyruvate from L-serine. The sequence is that of L-threonine ammonia-lyase from Geobacter sulfurreducens (strain ATCC 51573 / DSM 12127 / PCA).